Here is an 84-residue protein sequence, read N- to C-terminus: Replication regulatory protein repA2 (84 aa).

Polar residues predominate over residues 1 to 13 (MSQTENAVTSSSG). The interval 1-31 (MSQTENAVTSSSGAKRAYRKGNPLSDAEKQR) is disordered.

In terms of biological role, this protein is involved in the determination of copy number in gene replication. It binds to the repA promoter thus inhibiting the synthesis of the mRNA for the initiator protein RepA. This Escherichia coli protein is Replication regulatory protein repA2 (repA2).